We begin with the raw amino-acid sequence, 376 residues long: Succinyl-diaminopimelate desuccinylase (376 aa).

Histidine 67 provides a ligand contact to Zn(2+). Residue aspartate 69 is part of the active site. Position 100 (aspartate 100) interacts with Zn(2+). Glutamate 134 serves as the catalytic Proton acceptor. Residues glutamate 135, glutamate 163, and histidine 349 each coordinate Zn(2+).

This sequence belongs to the peptidase M20A family. DapE subfamily. In terms of assembly, homodimer. Requires Zn(2+) as cofactor. The cofactor is Co(2+).

The enzyme catalyses N-succinyl-(2S,6S)-2,6-diaminopimelate + H2O = (2S,6S)-2,6-diaminopimelate + succinate. It participates in amino-acid biosynthesis; L-lysine biosynthesis via DAP pathway; LL-2,6-diaminopimelate from (S)-tetrahydrodipicolinate (succinylase route): step 3/3. Functionally, catalyzes the hydrolysis of N-succinyl-L,L-diaminopimelic acid (SDAP), forming succinate and LL-2,6-diaminopimelate (DAP), an intermediate involved in the bacterial biosynthesis of lysine and meso-diaminopimelic acid, an essential component of bacterial cell walls. This Shewanella sediminis (strain HAW-EB3) protein is Succinyl-diaminopimelate desuccinylase.